Here is a 92-residue protein sequence, read N- to C-terminus: Small ribosomal subunit protein uS19c (92 aa).

Belongs to the universal ribosomal protein uS19 family.

The protein resides in the plastid. The protein localises to the chloroplast. Functionally, protein S19 forms a complex with S13 that binds strongly to the 16S ribosomal RNA. The sequence is that of Small ribosomal subunit protein uS19c from Spirogyra maxima (Green alga).